We begin with the raw amino-acid sequence, 106 residues long: Cytochrome c (106 aa).

Cys17, Cys20, and His21 together coordinate heme c. Lys75 is subject to N6,N6,N6-trimethyllysine. Residue Met83 coordinates heme c.

Belongs to the cytochrome c family. Post-translationally, binds 1 heme c group covalently per subunit.

It localises to the mitochondrion intermembrane space. Electron carrier protein. The oxidized form of the cytochrome c heme group can accept an electron from the heme group of the cytochrome c1 subunit of cytochrome reductase. Cytochrome c then transfers this electron to the cytochrome oxidase complex, the final protein carrier in the mitochondrial electron-transport chain. In Gibberella zeae (strain ATCC MYA-4620 / CBS 123657 / FGSC 9075 / NRRL 31084 / PH-1) (Wheat head blight fungus), this protein is Cytochrome c (CYC1).